The primary structure comprises 443 residues: Methyl-coenzyme M reductase subunit beta (443 aa).

Tyr367 serves as a coordination point for coenzyme M. Coenzyme B is bound at residue Gly369.

It belongs to the methyl-coenzyme M reductase beta subunit family. MCR is a hexamer of two alpha, two beta, and two gamma chains, forming a dimer of heterotrimers. It depends on coenzyme F430 as a cofactor.

It is found in the cytoplasm. The enzyme catalyses coenzyme B + methyl-coenzyme M = methane + coenzyme M-coenzyme B heterodisulfide. Its pathway is one-carbon metabolism; methyl-coenzyme M reduction; methane from methyl-coenzyme M: step 1/1. Its function is as follows. Component of the methyl-coenzyme M reductase (MCR) I that catalyzes the reductive cleavage of methyl-coenzyme M (CoM-S-CH3 or 2-(methylthio)ethanesulfonate) using coenzyme B (CoB or 7-mercaptoheptanoylthreonine phosphate) as reductant which results in the production of methane and the mixed heterodisulfide of CoB and CoM (CoM-S-S-CoB). This is the final step in methanogenesis. The protein is Methyl-coenzyme M reductase subunit beta (mcrB) of Methanococcus vannielii.